A 768-amino-acid chain; its full sequence is Actin filament-associated protein 1-like 1 (768 aa).

The interval 83 to 145 (LRDMSDDGEP…GKSPEYISSH (63 aa)) is disordered. Phosphoserine occurs at positions 87, 93, 97, 103, and 153. The segment covering 165 to 185 (SYPTTRMNGELKNSYNDSDAM) has biased composition (polar residues). Residues 165–211 (SYPTTRMNGELKNSYNDSDAMSSSYESYDEEEEEEKGRQPKHQWPSE) form a disordered region. In terms of domain architecture, PH 1 spans 220–316 (DCRICAFLLR…WLKVIREVSR (97 aa)). Residues serine 329 and serine 343 each carry the phosphoserine modification. The segment covering 340-349 (KRLSQEKQNS) has biased composition (basic and acidic residues). The interval 340–382 (KRLSQEKQNSDSDSLGMNDSGSTLGRREACEHGKGKKNSLAEL) is disordered. Polar residues predominate over residues 350-362 (DSDSLGMNDSGST). Residues 418–512 (EVPCCGYLNV…WLGLLLVEMG (95 aa)) enclose the PH 2 domain. A Phosphotyrosine modification is found at tyrosine 557. Residues 564-609 (KVQDEEPQRPTGAQVKRHASSCSEKSHRADPQVKVKRHASSANQYK) are disordered. The span at 587–596 (EKSHRADPQV) shows a compositional bias: basic and acidic residues. Positions 611-701 (GKNRAEEDAR…AVKERLQQSL (91 aa)) form a coiled coil. The tract at residues 705–768 (PALGLSVSNK…KAKEWEMKKT (64 aa)) is disordered. The span at 710–734 (SVSNKNKSQDTTNKPQSNAPEQSLP) shows a compositional bias: polar residues. Position 747 is a phosphoserine (serine 747). Residues 759 to 768 (KAKEWEMKKT) are compositionally biased toward basic and acidic residues.

In terms of assembly, interacts with CTTN.

The protein localises to the cytoplasm. Its subcellular location is the cell projection. The protein resides in the podosome. It localises to the invadopodium. It is found in the cytoskeleton. The protein localises to the stress fiber. May be involved in podosome and invadosome formation. This is Actin filament-associated protein 1-like 1 (Afap1l1) from Mus musculus (Mouse).